Reading from the N-terminus, the 317-residue chain is Lipoyl synthase (317 aa).

7 residues coordinate [4Fe-4S] cluster: Cys-59, Cys-64, Cys-70, Cys-85, Cys-89, Cys-92, and Ser-298. The 217-residue stretch at Trp-71–Leu-287 folds into the Radical SAM core domain.

The protein belongs to the radical SAM superfamily. Lipoyl synthase family. [4Fe-4S] cluster serves as cofactor.

The protein localises to the cytoplasm. The enzyme catalyses [[Fe-S] cluster scaffold protein carrying a second [4Fe-4S](2+) cluster] + N(6)-octanoyl-L-lysyl-[protein] + 2 oxidized [2Fe-2S]-[ferredoxin] + 2 S-adenosyl-L-methionine + 4 H(+) = [[Fe-S] cluster scaffold protein] + N(6)-[(R)-dihydrolipoyl]-L-lysyl-[protein] + 4 Fe(3+) + 2 hydrogen sulfide + 2 5'-deoxyadenosine + 2 L-methionine + 2 reduced [2Fe-2S]-[ferredoxin]. The protein operates within protein modification; protein lipoylation via endogenous pathway; protein N(6)-(lipoyl)lysine from octanoyl-[acyl-carrier-protein]: step 2/2. Catalyzes the radical-mediated insertion of two sulfur atoms into the C-6 and C-8 positions of the octanoyl moiety bound to the lipoyl domains of lipoate-dependent enzymes, thereby converting the octanoylated domains into lipoylated derivatives. This is Lipoyl synthase from Bartonella bacilliformis (strain ATCC 35685 / KC583 / Herrer 020/F12,63).